We begin with the raw amino-acid sequence, 389 residues long: S-adenosylmethionine synthase (389 aa).

His-17 contacts ATP. Asp-19 is a Mg(2+) binding site. Glu-45 is a K(+) binding site. L-methionine contacts are provided by Glu-58 and Gln-101. A flexible loop region spans residues 101-111 (QSPDIAQGVTE). ATP-binding positions include 168-170 (DSK), 234-235 (RF), Asp-243, 249-250 (RK), Ala-266, and Lys-270. Asp-243 lines the L-methionine pocket. L-methionine is bound at residue Lys-274.

Belongs to the AdoMet synthase family. Homotetramer; dimer of dimers. The cofactor is Mg(2+). K(+) is required as a cofactor.

The protein resides in the cytoplasm. The enzyme catalyses L-methionine + ATP + H2O = S-adenosyl-L-methionine + phosphate + diphosphate. It functions in the pathway amino-acid biosynthesis; S-adenosyl-L-methionine biosynthesis; S-adenosyl-L-methionine from L-methionine: step 1/1. Catalyzes the formation of S-adenosylmethionine (AdoMet) from methionine and ATP. The overall synthetic reaction is composed of two sequential steps, AdoMet formation and the subsequent tripolyphosphate hydrolysis which occurs prior to release of AdoMet from the enzyme. This chain is S-adenosylmethionine synthase, found in Geotalea uraniireducens (strain Rf4) (Geobacter uraniireducens).